The sequence spans 99 residues: DNA-binding protein HU (99 aa).

A disordered region spans residues 63 to 82; it reads HRKEREGRNPKTGAKMKIDA.

This sequence belongs to the bacterial histone-like protein family. Homodimer.

Its function is as follows. Histone-like DNA-binding protein which is capable of wrapping DNA to stabilize it, and thus to prevent its denaturation under extreme environmental conditions. This chain is DNA-binding protein HU (hup), found in Rickettsia prowazekii (strain Madrid E).